The following is a 360-amino-acid chain: Photosystem II protein D1 (360 aa).

A run of 3 helical transmembrane segments spans residues 29-46 (YIGW…TATS), 118-133 (HFFI…EWEL), and 142-156 (WIAV…AATA). A chlorophyll a-binding site is contributed by histidine 118. A pheophytin a-binding site is contributed by tyrosine 126. [CaMn4O5] cluster-binding residues include aspartate 170 and glutamate 189. Residues 197–218 (FHMMGVAGVFGGSLFSAMHGSL) traverse the membrane as a helical segment. Chlorophyll a is bound at residue histidine 198. Residues histidine 215 and 264–265 (SF) each bind a quinone. Histidine 215 contributes to the Fe cation binding site. Histidine 272 provides a ligand contact to Fe cation. Residues 274-288 (FLALWPVVCICVTAL) form a helical membrane-spanning segment. Residues histidine 332, glutamate 333, aspartate 342, and alanine 344 each contribute to the [CaMn4O5] cluster site. The propeptide occupies 345–360 (SEVSLPVALNKVEING).

This sequence belongs to the reaction center PufL/M/PsbA/D family. As to quaternary structure, PSII is composed of 1 copy each of membrane proteins PsbA, PsbB, PsbC, PsbD, PsbE, PsbF, PsbH, PsbI, PsbJ, PsbK, PsbL, PsbM, PsbT, PsbY, PsbZ, Psb30/Ycf12, at least 3 peripheral proteins of the oxygen-evolving complex and a large number of cofactors. It forms dimeric complexes. It depends on The D1/D2 heterodimer binds P680, chlorophylls that are the primary electron donor of PSII, and subsequent electron acceptors. It shares a non-heme iron and each subunit binds pheophytin, quinone, additional chlorophylls, carotenoids and lipids. D1 provides most of the ligands for the Mn4-Ca-O5 cluster of the oxygen-evolving complex (OEC). There is also a Cl(-1) ion associated with D1 and D2, which is required for oxygen evolution. The PSII complex binds additional chlorophylls, carotenoids and specific lipids. as a cofactor. Post-translationally, tyr-161 forms a radical intermediate that is referred to as redox-active TyrZ, YZ or Y-Z. C-terminally processed by CTPA; processing is essential to allow assembly of the oxygen-evolving complex and thus photosynthetic growth.

It localises to the plastid. It is found in the chloroplast thylakoid membrane. The catalysed reaction is 2 a plastoquinone + 4 hnu + 2 H2O = 2 a plastoquinol + O2. Photosystem II (PSII) is a light-driven water:plastoquinone oxidoreductase that uses light energy to abstract electrons from H(2)O, generating O(2) and a proton gradient subsequently used for ATP formation. It consists of a core antenna complex that captures photons, and an electron transfer chain that converts photonic excitation into a charge separation. The D1/D2 (PsbA/PsbD) reaction center heterodimer binds P680, the primary electron donor of PSII as well as several subsequent electron acceptors. The protein is Photosystem II protein D1 of Galdieria sulphuraria (Red alga).